Here is a 166-residue protein sequence, read N- to C-terminus: Interferon gamma (166 aa).

Residues 1–23 form the signal peptide; that stretch reads MSYTTYFLAFQLCVTLCFSGSYC. At Q24 the chain carries Pyrrolidone carboxylic acid. 2 N-linked (GlcNAc...) asparagine glycosylation sites follow: N39 and N106.

The protein belongs to the type II (or gamma) interferon family. Homodimer. Interacts with IFNGR1 (via extracellular domain); this interaction promotes IFNGR1 dimerization. As to expression, released primarily from activated T lymphocytes.

Its subcellular location is the secreted. Its function is as follows. Type II interferon produced by immune cells such as T-cells and NK cells that plays crucial roles in antimicrobial, antiviral, and antitumor responses by activating effector immune cells and enhancing antigen presentation. Primarily signals through the JAK-STAT pathway after interaction with its receptor IFNGR1 to affect gene regulation. Upon IFNG binding, IFNGR1 intracellular domain opens out to allow association of downstream signaling components JAK2, JAK1 and STAT1, leading to STAT1 activation, nuclear translocation and transcription of IFNG-regulated genes. Many of the induced genes are transcription factors such as IRF1 that are able to further drive regulation of a next wave of transcription. Plays a role in class I antigen presentation pathway by inducing a replacement of catalytic proteasome subunits with immunoproteasome subunits. In turn, increases the quantity, quality, and repertoire of peptides for class I MHC loading. Increases the efficiency of peptide generation also by inducing the expression of activator PA28 that associates with the proteasome and alters its proteolytic cleavage preference. Up-regulates as well MHC II complexes on the cell surface by promoting expression of several key molecules such as cathepsins B/CTSB, H/CTSH, and L/CTSL. Participates in the regulation of hematopoietic stem cells during development and under homeostatic conditions by affecting their development, quiescence, and differentiation. This Sus scrofa (Pig) protein is Interferon gamma (IFNG).